Here is a 100-residue protein sequence, read N- to C-terminus: Small ribosomal subunit protein uS14 (100 aa).

The protein belongs to the universal ribosomal protein uS14 family. Part of the 30S ribosomal subunit. Contacts proteins S3 and S10.

Functionally, binds 16S rRNA, required for the assembly of 30S particles and may also be responsible for determining the conformation of the 16S rRNA at the A site. The protein is Small ribosomal subunit protein uS14 of Synechococcus sp. (strain CC9902).